Reading from the N-terminus, the 2194-residue chain is Genome polyprotein (2194 aa).

Gly2 carries N-myristoyl glycine; by host lipidation. Topologically, residues 2 to 1504 are cytoplasmic; the sequence is GAQVSTQKTG…HVSRAFICLQ (1503 aa). Residues 566 to 582 form an amphipathic alpha-helix region; the sequence is LYQNDPEGALNKAVGRV. Residues His881 and Asp899 each act as for protease 2A activity in the active site. 2 residues coordinate Zn(2+): Cys916 and Cys918. The For protease 2A activity role is filled by Cys970. 2 residues coordinate Zn(2+): Cys976 and His978. The segment at 1110 to 1182 is membrane-binding; it reads NNNWLKKFTE…EQSAPSQSDQ (73 aa). The interval 1110-1248 is oligomerization; the sequence is NNNWLKKFTE…SPGAGKSVAT (139 aa). The interval 1131–1135 is RNA-binding; it reads AIKIQ. The 157-residue stretch at 1214 to 1370 folds into the SF3 helicase domain; it reads EKKMSNYIQF…SMYSQNGKIN (157 aa). Zn(2+) contacts are provided by Cys1378, Cys1390, and Cys1395. The C4-type; degenerate zinc finger occupies 1378–1395; sequence CDEECCPVNFKRCCPLVC. The tract at residues 1422–1429 is RNA-binding; it reads EYNHRHSV. Residues 1433 to 1438 form an oligomerization region; the sequence is LEALFQ. Residues 1505–1520 lie within the membrane without spanning it; the sequence is ALTTFVSVAGIIYIIY. Residues 1521–2194 lie on the Cytoplasmic side of the membrane; the sequence is KLFAGFQGAY…TLRRKWLDSF (674 aa). Tyr1530 carries the O-(5'-phospho-RNA)-tyrosine modification. The Peptidase C3 domain maps to 1550-1728; the sequence is GPAFEFAVAM…FSAALLRHYF (179 aa). Active-site for protease 3C activity residues include His1589, Glu1620, and Cys1696. One can recognise a RdRp catalytic domain in the interval 1959-2075; that stretch reads GHLIAFDYSG…SYPHPIDASL (117 aa). Mg(2+)-binding residues include Asp1965 and Asp2061.

It belongs to the picornaviruses polyprotein family. Interacts with capsid protein VP1 and capsid protein VP3 to form heterotrimeric protomers. In terms of assembly, interacts with capsid protein VP0, and capsid protein VP3 to form heterotrimeric protomers. Five protomers subsequently associate to form pentamers which serve as building blocks for the capsid. Interacts with capsid protein VP2, capsid protein VP3 and capsid protein VP4 following cleavage of capsid protein VP0. As to quaternary structure, interacts with capsid protein VP1 and capsid protein VP3 in the mature capsid. Interacts with capsid protein VP0 and capsid protein VP1 to form heterotrimeric protomers. Five protomers subsequently associate to form pentamers which serve as building blocks for the capsid. Interacts with capsid protein VP4 in the mature capsid. Interacts with protein 2C; this interaction may be important for virion morphogenesis. In terms of assembly, interacts with capsid protein VP1 and capsid protein VP3. As to quaternary structure, homodimer. Homohexamer; forms a hexameric ring structure with 6-fold symmetry characteristic of AAA+ ATPases. Interacts (via N-terminus) with host RTN3 (via reticulon domain); this interaction is important for viral replication. Interacts with capsid protein VP3; this interaction may be important for virion morphogenesis. In terms of assembly, interacts with protein 3CD. As to quaternary structure, homodimer. Interacts with host GBF1. Interacts (via GOLD domain) with host ACBD3 (via GOLD domain); this interaction allows the formation of a viral protein 3A/ACBD3 heterotetramer with a 2:2 stoichiometry, which will stimulate the recruitment of host PI4KB in order to synthesize PI4P at the viral RNA replication sites. Interacts with RNA-directed RNA polymerase. In terms of assembly, interacts with protein 3AB and with RNA-directed RNA polymerase. As to quaternary structure, interacts with Viral protein genome-linked and with protein 3CD. It depends on Mg(2+) as a cofactor. Post-translationally, specific enzymatic cleavages in vivo by the viral proteases yield processing intermediates and the mature proteins. In terms of processing, myristoylation is required for the formation of pentamers during virus assembly. Further assembly of 12 pentamers and a molecule of genomic RNA generates the provirion. During virion maturation, immature virions are rendered infectious following cleavage of VP0 into VP4 and VP2. This maturation seems to be an autocatalytic event triggered by the presence of RNA in the capsid and it is followed by a conformational change infectious virion. Post-translationally, myristoylation is required during RNA encapsidation and formation of the mature virus particle. In terms of processing, VPg is uridylylated by the polymerase into VPg-pUpU. This acts as a nucleotide-peptide primer for the genomic RNA replication.

The protein localises to the virion. It is found in the host cytoplasm. The protein resides in the host cytoplasmic vesicle membrane. Its subcellular location is the host nucleus. It carries out the reaction a ribonucleoside 5'-triphosphate + H2O = a ribonucleoside 5'-diphosphate + phosphate + H(+). It catalyses the reaction Selective cleavage of Tyr-|-Gly bond in the picornavirus polyprotein.. The catalysed reaction is RNA(n) + a ribonucleoside 5'-triphosphate = RNA(n+1) + diphosphate. The enzyme catalyses Selective cleavage of Gln-|-Gly bond in the poliovirus polyprotein. In other picornavirus reactions Glu may be substituted for Gln, and Ser or Thr for Gly.. Replication or transcription is subject to high level of random mutations by the nucleotide analog ribavirin. Its function is as follows. Forms an icosahedral capsid of pseudo T=3 symmetry with capsid proteins VP2 and VP3. The capsid is 300 Angstroms in diameter, composed of 60 copies of each capsid protein and enclosing the viral positive strand RNA genome. Capsid protein VP1 mainly forms the vertices of the capsid. Capsid protein VP1 interacts with host cell receptor to provide virion attachment to target host cells. This attachment induces virion internalization. Tyrosine kinases are probably involved in the entry process. After binding to its receptor, the capsid undergoes conformational changes. Capsid protein VP1 N-terminus (that contains an amphipathic alpha-helix) and capsid protein VP4 are externalized. Together, they shape a pore in the host membrane through which viral genome is translocated to host cell cytoplasm. Functionally, forms an icosahedral capsid of pseudo T=3 symmetry with capsid proteins VP2 and VP3. The capsid is 300 Angstroms in diameter, composed of 60 copies of each capsid protein and enclosing the viral positive strand RNA genome. Lies on the inner surface of the capsid shell. After binding to the host receptor, the capsid undergoes conformational changes. Capsid protein VP4 is released, Capsid protein VP1 N-terminus is externalized, and together, they shape a pore in the host membrane through which the viral genome is translocated into the host cell cytoplasm. In terms of biological role, component of immature procapsids, which is cleaved into capsid proteins VP4 and VP2 after maturation. Allows the capsid to remain inactive before the maturation step. Its function is as follows. Cysteine protease that cleaves viral polyprotein and specific host proteins. It is responsible for the autocatalytic cleavage between the P1 and P2 regions, which is the first cleavage occurring in the polyprotein. Also cleaves the host translation initiation factor EIF4G1, in order to shut down the capped cellular mRNA translation. Inhibits the host nucleus-cytoplasm protein and RNA trafficking by cleaving host members of the nuclear pores. Counteracts stress granule formation probably by antagonizing its assembly or promoting its dissassembly. Functionally, plays an essential role in the virus replication cycle by acting as a viroporin. Creates a pore in the host endoplasmic reticulum and as a consequence releases Ca2+ in the cytoplasm of infected cell. In turn, high levels of cytoplasmic calcium may trigger membrane trafficking and transport of viral ER-associated proteins to viroplasms, sites of viral genome replication. Induces and associates with structural rearrangements of intracellular membranes. Displays RNA-binding, nucleotide binding and NTPase activities. May play a role in virion morphogenesis and viral RNA encapsidation by interacting with the capsid protein VP3. In terms of biological role, localizes the viral replication complex to the surface of membranous vesicles. Together with protein 3CD binds the Cis-Active RNA Element (CRE) which is involved in RNA synthesis initiation. Acts as a cofactor to stimulate the activity of 3D polymerase, maybe through a nucleid acid chaperone activity. Its function is as follows. Localizes the viral replication complex to the surface of membranous vesicles. It inhibits host cell endoplasmic reticulum-to-Golgi apparatus transport and causes the disassembly of the Golgi complex, possibly through GBF1 interaction. This would result in depletion of MHC, trail receptors and IFN receptors at the host cell surface. Plays an essential role in viral RNA replication by recruiting ACBD3 and PI4KB at the viral replication sites, thereby allowing the formation of the rearranged membranous structures where viral replication takes place. Functionally, acts as a primer for viral RNA replication and remains covalently bound to viral genomic RNA. VPg is uridylylated prior to priming replication into VPg-pUpU. The oriI viral genomic sequence may act as a template for this. The VPg-pUpU is then used as primer on the genomic RNA poly(A) by the RNA-dependent RNA polymerase to replicate the viral genome. During genome replication, the VPg-RNA linkage is removed by the host TDP2, thereby accelerating replication. During the late stage of the replication cycle, host TDP2 is excluded from sites of viral RNA synthesis and encapsidation, allowing for the generation of progeny virions. Involved in the viral replication complex and viral polypeptide maturation. It exhibits protease activity with a specificity and catalytic efficiency that is different from protease 3C. Protein 3CD lacks polymerase activity. Protein 3CD binds to the 5'UTR of the viral genome. In terms of biological role, replicates the viral genomic RNA on the surface of intracellular membranes. May form linear arrays of subunits that propagate along a strong head-to-tail interaction called interface-I. Covalently attaches UMP to a tyrosine of VPg, which is used to prime RNA synthesis. The positive stranded RNA genome is first replicated at virus induced membranous vesicles, creating a dsRNA genomic replication form. This dsRNA is then used as template to synthesize positive stranded RNA genomes. ss(+)RNA genomes are either translated, replicated or encapsidated. Its function is as follows. Major viral protease that mediates proteolytic processing of the polyprotein. Cleaves host EIF5B, contributing to host translation shutoff. Also cleaves host PABPC1, contributing to host translation shutoff. Cleaves host NLRP1, triggers host N-glycine-mediated degradation of the autoinhibitory NLRP1 N-terminal fragment. This is Genome polyprotein from Homo sapiens (Human).